The following is a 507-amino-acid chain: Beta-glucosidase 13 (507 aa).

The N-terminal stretch at 1 to 22 (MRTKYFSLLVFIIVLASNEVIA) is a signal peptide. An a beta-D-glucoside-binding site is contributed by Gln-50. N-linked (GlcNAc...) asparagine glycosylation occurs at Asn-81. Residues His-154 and 199 to 200 (NE) each bind a beta-D-glucoside. Glu-200 functions as the Proton donor in the catalytic mechanism. Cys-219 and Cys-227 form a disulfide bridge. Asn-226 is a glycosylation site (N-linked (GlcNAc...) asparagine). Tyr-344 is a binding site for a beta-D-glucoside. Asn-358 carries N-linked (GlcNAc...) asparagine glycosylation. A beta-D-glucoside is bound by residues Glu-414, Trp-459, 466 to 467 (EW), and Phe-475. Glu-414 serves as the catalytic Nucleophile.

It belongs to the glycosyl hydrolase 1 family.

It carries out the reaction Hydrolysis of terminal, non-reducing beta-D-glucosyl residues with release of beta-D-glucose.. The protein is Beta-glucosidase 13 of Arabidopsis thaliana (Mouse-ear cress).